The sequence spans 234 residues: Interleukin-27 subunit alpha (234 aa).

Residues 1–28 (MGQVTGDLGWRLSLLLLPLLLVQAGSWG) form the signal peptide. N-linked (GlcNAc...) asparagine glycosylation occurs at asparagine 85. The tract at residues 160–185 (KEEEDKEEEEEEEEEEKKLPLGALGG) is disordered. Acidic residues predominate over residues 161–174 (EEEDKEEEEEEEEE).

Belongs to the IL-6 superfamily. Heterodimer with EBI3; not disulfide-linked. This heterodimer is known as interleukin IL-27. In terms of processing, O-glycosylated. As to expression, expressed in macrophages and dendritic cells.

The protein resides in the secreted. In terms of biological role, associates with EBI3 to form the IL-27 interleukin, a heterodimeric cytokine which functions in innate immunity. IL-27 has pro- and anti-inflammatory properties, that can regulate T-helper cell development, suppress T-cell proliferation, stimulate cytotoxic T-cell activity, induce isotype switching in B-cells, and that has diverse effects on innate immune cells. Among its target cells are CD4 T-helper cells which can differentiate in type 1 effector cells (TH1), type 2 effector cells (TH2) and IL17 producing helper T-cells (TH17). It drives rapid clonal expansion of naive but not memory CD4 T-cells. It also strongly synergizes with IL-12 to trigger interferon-gamma/IFN-gamma production of naive CD4 T-cells, binds to the cytokine receptor WSX-1/TCCR which appears to be required but not sufficient for IL-27-mediated signal transduction. IL-27 potentiate the early phase of TH1 response and suppress TH2 and TH17 differentiation. It induces the differentiation of TH1 cells via two distinct pathways, p38 MAPK/TBX21- and ICAM1/ITGAL/ERK-dependent pathways. It also induces STAT1, STAT3, STAT4 and STAT5 phosphorylation and activates TBX21/T-Bet via STAT1 with resulting IL12RB2 up-regulation, an event crucial to TH1 cell commitment. It suppresses the expression of GATA3, the inhibitor TH1 cells development. In CD8 T-cells, it activates STATs as well as GZMB. IL-27 reveals to be a potent inhibitor of TH17 cell development and of IL-17 production. Indeed IL27 alone is also able to inhibit the production of IL17 by CD4 and CD8 T-cells. While IL-27 suppressed the development of pro-inflammatory Th17 cells via STAT1, it inhibits the development of anti-inflammatory inducible regulatory T-cells, iTreg, independently of STAT1. IL-27 also has an effect on cytokine production, it suppresses pro-inflammatory cytokine production such as IL2, IL4, IL5 and IL6 and activates suppressors of cytokine signaling such as SOCS1 and SOCS3. Apart from suppression of cytokine production, IL-27 also antagonizes the effects of some cytokines such as IL6 through direct effects on T-cells. Another important role of IL-27 is its antitumor activity as well as its antiangiogenic activity with activation of production of antiangiogenic chemokines such as IP-10/CXCL10 and MIG/CXCL9. The sequence is that of Interleukin-27 subunit alpha (Il27) from Mus musculus (Mouse).